A 179-amino-acid polypeptide reads, in one-letter code: Adenine phosphoribosyltransferase (179 aa).

Belongs to the purine/pyrimidine phosphoribosyltransferase family. Homodimer.

The protein localises to the cytoplasm. The enzyme catalyses AMP + diphosphate = 5-phospho-alpha-D-ribose 1-diphosphate + adenine. Its pathway is purine metabolism; AMP biosynthesis via salvage pathway; AMP from adenine: step 1/1. In terms of biological role, catalyzes a salvage reaction resulting in the formation of AMP, that is energically less costly than de novo synthesis. The protein is Adenine phosphoribosyltransferase of Helicobacter pylori (strain HPAG1).